Consider the following 141-residue polypeptide: Large ribosomal subunit protein uL22 (141 aa).

Residues 110–141 (EEKKTVAKKTTTTKAPAKKTTSTKKATVKKES) form a disordered region. Residues 117–134 (KKTTTTKAPAKKTTSTKK) are compositionally biased toward low complexity.

The protein belongs to the universal ribosomal protein uL22 family. Part of the 50S ribosomal subunit.

This protein binds specifically to 23S rRNA; its binding is stimulated by other ribosomal proteins, e.g. L4, L17, and L20. It is important during the early stages of 50S assembly. It makes multiple contacts with different domains of the 23S rRNA in the assembled 50S subunit and ribosome. Functionally, the globular domain of the protein is located near the polypeptide exit tunnel on the outside of the subunit, while an extended beta-hairpin is found that lines the wall of the exit tunnel in the center of the 70S ribosome. In Campylobacter jejuni (strain RM1221), this protein is Large ribosomal subunit protein uL22.